A 321-amino-acid polypeptide reads, in one-letter code: Annexin D3 (321 aa).

A2 bears the N-acetylalanine mark. Annexin repeat units follow at residues 11–82, 83–159, 171–243, and 247–318; these read PSPA…SWTY, DPAE…TLAS, EVAT…VAIF, and TPEK…TLLG. Ca(2+) is bound by residues G26, G28, and E68. A Phosphothreonine modification is found at T117. Positions 260 and 264 each coordinate Ca(2+). Y289 bears the Phosphotyrosine mark. D304 lines the Ca(2+) pocket.

The protein belongs to the annexin (TC 1.A.31.1) family. Expressed mainly in roots and flowers. Lower in stems and leaves.

This chain is Annexin D3 (ANN3), found in Arabidopsis thaliana (Mouse-ear cress).